A 287-amino-acid polypeptide reads, in one-letter code: Nitrogenase iron protein (287 aa).

8–15 (GKGGIGKS) is a binding site for ATP. Cys-96 serves as a coordination point for [4Fe-4S] cluster. The residue at position 99 (Arg-99) is an ADP-ribosylarginine; by dinitrogenase reductase ADP-ribosyltransferase. [4Fe-4S] cluster is bound at residue Cys-130.

This sequence belongs to the NifH/BchL/ChlL family. As to quaternary structure, homodimer. [4Fe-4S] cluster is required as a cofactor. In terms of processing, the reversible ADP-ribosylation of Arg-99 inactivates the nitrogenase reductase and regulates nitrogenase activity.

The catalysed reaction is N2 + 8 reduced [2Fe-2S]-[ferredoxin] + 16 ATP + 16 H2O = H2 + 8 oxidized [2Fe-2S]-[ferredoxin] + 2 NH4(+) + 16 ADP + 16 phosphate + 6 H(+). The key enzymatic reactions in nitrogen fixation are catalyzed by the nitrogenase complex, which has 2 components: the iron protein and the molybdenum-iron protein. The chain is Nitrogenase iron protein from Frankia casuarinae (strain DSM 45818 / CECT 9043 / HFP020203 / CcI3).